A 238-amino-acid polypeptide reads, in one-letter code: Complement C1q-like protein 4 (238 aa).

Positions methionine 1–serine 15 are cleaved as a signal peptide. The tract at residues glycine 36–alanine 101 is disordered. Residues proline 53 to glycine 96 form the Collagen-like domain. Residues proline 71 to glycine 96 show a composition bias toward pro residues. In terms of domain architecture, C1q spans glycine 105–aspartate 238.

In terms of assembly, forms homooligomers, predominantly dimers or trimers. Forms heterooligomers with C1QL1, C1QL2 and C1QL3, when proteins are coexpressed; this interaction does not occur after secretion. Interacts with ADGRB3. In terms of tissue distribution, highest expression levels in testis and adipose tissue, lower levels in skeletal muscle and kidney.

The protein localises to the secreted. Functionally, may regulate the number of excitatory synapses that are formed on hippocampus neurons. Has no effect on inhibitory synapses. May inhibit adipocyte differentiation at an early stage of the process. The protein is Complement C1q-like protein 4 (C1QL4) of Homo sapiens (Human).